The sequence spans 971 residues: Oncostatin-M-specific receptor subunit beta (971 aa).

The first 23 residues, 1–23, serve as a signal peptide directing secretion; that stretch reads MAFSVVLHPAFLLAVLSLRASRS. Residues 24-737 lie on the Extracellular side of the membrane; that stretch reads EVLEEPLPLT…VTTPDARSHM (714 aa). Residues Asn74, Asn97, Asn130, Asn162, and Asn239 are each glycosylated (N-linked (GlcNAc...) asparagine). Cys242 and Cys252 are oxidised to a cystine. Residues Asn271, Asn304, Asn323, and Asn377 are each glycosylated (N-linked (GlcNAc...) asparagine). Fibronectin type-III domains lie at 332-425, 427-523, 524-620, and 622-733; these read APQD…TPET, PSQA…SNDS, GHEE…TQEL, and PLVN…TPDA. Residues 412 to 416 carry the WSXWS motif motif; sequence WSDWT. Asn491, Asn541, Asn577, Asn689, and Asn722 each carry an N-linked (GlcNAc...) asparagine glycan. Residues 738-758 form a helical membrane-spanning segment; sequence LLQIILPMTLCVLLSIIVCYW. Over 759 to 971 the chain is Cytoplasmic; sequence KSQWVKEKCY…STVLLGQGEQ (213 aa). The Box 1 motif motif lies at 767-775; the sequence is CYPDIPNPY. The tract at residues 949–971 is disordered; it reads LASPSLKEDNSLTSTVLLGQGEQ. The span at 959-971 shows a compositional bias: polar residues; it reads SLTSTVLLGQGEQ.

Belongs to the type I cytokine receptor family. Type 2 subfamily. Heterodimer composed of OSMR and IL6ST (type II OSM receptor). Heterodimer with IL31RA to form the IL31 receptor. Widely expressed. Expressed at highest levels in the lung, heart, thymus and spleen. Expressed in dorsal root ganglia.

It localises to the membrane. Functionally, associates with IL31RA to form the IL31 receptor. Binds IL31 to activate STAT3 and possibly STAT1 and STAT5. Capable of transducing OSM-specific signaling events. The chain is Oncostatin-M-specific receptor subunit beta (Osmr) from Mus musculus (Mouse).